A 197-amino-acid chain; its full sequence is UPF0637 protein LEUM_0496 (197 aa).

Belongs to the UPF0637 family.

This is UPF0637 protein LEUM_0496 from Leuconostoc mesenteroides subsp. mesenteroides (strain ATCC 8293 / DSM 20343 / BCRC 11652 / CCM 1803 / JCM 6124 / NCDO 523 / NBRC 100496 / NCIMB 8023 / NCTC 12954 / NRRL B-1118 / 37Y).